The chain runs to 351 residues: Anthranilate phosphoribosyltransferase (351 aa).

Residues Gly-80, Gly-83–Asp-84, Thr-88, Asn-90–Thr-93, Lys-108–Ser-116, and Ser-120 each bind 5-phospho-alpha-D-ribose 1-diphosphate. Gly-80 lines the anthranilate pocket. Ser-92 is a Mg(2+) binding site. Asn-111 is a binding site for anthranilate. Residue Arg-166 participates in anthranilate binding. Mg(2+)-binding residues include Asp-229 and Glu-230.

The protein belongs to the anthranilate phosphoribosyltransferase family. In terms of assembly, homodimer. The cofactor is Mg(2+).

It carries out the reaction N-(5-phospho-beta-D-ribosyl)anthranilate + diphosphate = 5-phospho-alpha-D-ribose 1-diphosphate + anthranilate. It participates in amino-acid biosynthesis; L-tryptophan biosynthesis; L-tryptophan from chorismate: step 2/5. In terms of biological role, catalyzes the transfer of the phosphoribosyl group of 5-phosphorylribose-1-pyrophosphate (PRPP) to anthranilate to yield N-(5'-phosphoribosyl)-anthranilate (PRA). The sequence is that of Anthranilate phosphoribosyltransferase from Pelodictyon phaeoclathratiforme (strain DSM 5477 / BU-1).